The chain runs to 126 residues: Large ribosomal subunit protein uL22 (126 aa).

This sequence belongs to the universal ribosomal protein uL22 family. Part of the 50S ribosomal subunit.

Functionally, this protein binds specifically to 23S rRNA; its binding is stimulated by other ribosomal proteins, e.g. L4, L17, and L20. It is important during the early stages of 50S assembly. It makes multiple contacts with different domains of the 23S rRNA in the assembled 50S subunit and ribosome. The globular domain of the protein is located near the polypeptide exit tunnel on the outside of the subunit, while an extended beta-hairpin is found that lines the wall of the exit tunnel in the center of the 70S ribosome. This Cereibacter sphaeroides (strain ATCC 17029 / ATH 2.4.9) (Rhodobacter sphaeroides) protein is Large ribosomal subunit protein uL22.